Reading from the N-terminus, the 130-residue chain is MSMQDPIADMLTRIRNGQAANKAAVTMPSSKLKVAIANVLKEEGFIEDFKVEGDTKPELELTLKYFQGKAVVESIQRVSRPGLRIYKKKDELPKVMAGLGIAVVSTSKGVMTDRAARQAGLGGEIICYVA.

The protein belongs to the universal ribosomal protein uS8 family. In terms of assembly, part of the 30S ribosomal subunit. Contacts proteins S5 and S12.

Its function is as follows. One of the primary rRNA binding proteins, it binds directly to 16S rRNA central domain where it helps coordinate assembly of the platform of the 30S subunit. The sequence is that of Small ribosomal subunit protein uS8 from Klebsiella pneumoniae subsp. pneumoniae (strain ATCC 700721 / MGH 78578).